We begin with the raw amino-acid sequence, 209 residues long: Small ribosomal subunit protein uS4 (209 aa).

The span at 1 to 13 (MSTKSRTRSKTRL) shows a compositional bias: basic residues. 2 disordered regions span residues 1-20 (MSTKSRTRSKTRLSRALGIP) and 28-49 (YLEKRPYAPGEHGRSKRKQDSD). Positions 95–160 (QRLDALVVRS…TEPFQVAAAG (66 aa)) constitute an S4 RNA-binding domain.

Belongs to the universal ribosomal protein uS4 family. Part of the 30S ribosomal subunit. Contacts protein S5. The interaction surface between S4 and S5 is involved in control of translational fidelity.

Its function is as follows. One of the primary rRNA binding proteins, it binds directly to 16S rRNA where it nucleates assembly of the body of the 30S subunit. Functionally, with S5 and S12 plays an important role in translational accuracy. This Clavibacter sepedonicus (Clavibacter michiganensis subsp. sepedonicus) protein is Small ribosomal subunit protein uS4.